Reading from the N-terminus, the 191-residue chain is UPF0312 protein Pmen_0419 (191 aa).

A signal peptide spans 1-22; that stretch reads MLKNALAALVLGSALIGGQAMA.

This sequence belongs to the UPF0312 family. Type 1 subfamily.

The protein localises to the periplasm. The sequence is that of UPF0312 protein Pmen_0419 from Ectopseudomonas mendocina (strain ymp) (Pseudomonas mendocina).